The following is a 444-amino-acid chain: Structure-specific endonuclease subunit SLX1 (444 aa).

The region spanning 23–105 (AFSCCYLLRS…QNTKVSRHAD (83 aa)) is the GIY-YIG domain. An SLX1-type zinc finger spans residues 240–295 (CGVCKQRLILQHDIIAVCSHSSCHCAAHLSCLSSHFLKDKDSDSELVPREGTCPTC). Positions 324-354 (RRQRAGTPKGQGLKSVRGRGHSEDENESDAL) are disordered.

This sequence belongs to the SLX1 family. As to quaternary structure, forms a heterodimer with SLX4. The cofactor is a divalent metal cation.

It localises to the nucleus. Catalytic subunit of the SLX1-SLX4 structure-specific endonuclease that resolves DNA secondary structures generated during DNA repair and recombination. Has endonuclease activity towards branched DNA substrates, introducing single-strand cuts in duplex DNA close to junctions with ss-DNA. This chain is Structure-specific endonuclease subunit SLX1, found in Paracoccidioides lutzii (strain ATCC MYA-826 / Pb01) (Paracoccidioides brasiliensis).